Consider the following 179-residue polypeptide: ADP-ribosylation factor (179 aa).

Gly2 is lipidated: N-myristoyl glycine. Residues 24-31 (GLDAAGKT), 67-71 (DVGGQ), and 126-129 (NKQD) each bind GTP.

The protein belongs to the small GTPase superfamily. Arf family.

The protein resides in the golgi apparatus. Its function is as follows. GTP-binding protein involved in protein trafficking; may modulate vesicle budding and uncoating within the Golgi apparatus. In Candida albicans (strain SC5314 / ATCC MYA-2876) (Yeast), this protein is ADP-ribosylation factor (ARF1).